A 227-amino-acid polypeptide reads, in one-letter code: Staphylococcal superantigen-like 10 (227 aa).

The signal sequence occupies residues 1–30 (MKFTALAKATLALGILTTGTLTTEVHSGHA).

The protein belongs to the staphylococcal/streptococcal toxin family. As to quaternary structure, interacts with prothrombin/F2 and coagulation factor X/F12. Interacts with human CXCR4.

The protein localises to the secreted. Plays a role in the inhibition of host complement activation via the classical pathway by interacting with the Fc region of human IgG and thereby interfering with the IgG/C1q interaction. Also inhibits the penultimate step of plasma clotting by interacting with prothrombin/F2 and coagulation factor X/F12. Does not affect the protease activity of thrombin but interferes with the conversion of prothrombin to thrombin. Interacts with human receptor CXCR4 and specifically inhibits CXCL12-induced calcium mobilization and cell migration. In Staphylococcus aureus (strain NCTC 8325 / PS 47), this protein is Staphylococcal superantigen-like 10.